Here is a 714-residue protein sequence, read N- to C-terminus: Probable serine/threonine-protein kinase At1g09600 (714 aa).

Positions 1-64 (MGCNCTKGTR…NVGFEERSND (64 aa)) are disordered. Gly2 carries N-myristoyl glycine lipidation. The span at 16–27 (VDNSNSIVSNVN) shows a compositional bias: low complexity. Residues 31-46 (RRSKPKKTPKKKKKSK) are compositionally biased toward basic residues. The Protein kinase domain occupies 163 to 447 (FEKLEKIGQG…TASALESEFF (285 aa)). ATP is bound by residues 169-177 (IGQGTYSSV) and Lys192. Asp287 acts as the Proton acceptor in catalysis. The span at 471-498 (KAQEEEAKRKKDTSSKQNDSKQVSRESK) shows a compositional bias: basic and acidic residues. Disordered regions lie at residues 471–579 (KAQE…RKEL) and 693–714 (VDKKTNRGDNRQTQAFLAANGR). 2 stretches are compositionally biased toward polar residues: residues 506–528 (NAESLTSIQKRQGQHNQVSNSDK) and 556–573 (GVSSVNRNGENVMMGSSR).

It belongs to the protein kinase superfamily. Ser/Thr protein kinase family.

This chain is Probable serine/threonine-protein kinase At1g09600, found in Arabidopsis thaliana (Mouse-ear cress).